We begin with the raw amino-acid sequence, 175 residues long: uncharacterized protein (175 aa).

Disordered regions lie at residues 68 to 111 (NKSN…DDDQ) and 154 to 175 (PERA…KLTT). The span at 95–106 (EEQPMMPYQQPP) shows a compositional bias: low complexity.

The protein belongs to the asfivirus H171R family.

It is found in the virion. This is an uncharacterized protein from African swine fever virus (isolate Pig/Kenya/KEN-50/1950) (ASFV).